We begin with the raw amino-acid sequence, 107 residues long: U1-lycotoxin-Ls1p (107 aa).

An N-terminal signal peptide occupies residues 1 to 20 (MMKVLVVVALLVTLISYSSS). Residues 21 to 41 (EGIDDLEADELLSLMANEQTR) constitute a propeptide that is removed on maturation. Disulfide bonds link C44–C59, C51–C68, C58–C86, and C70–C84.

This sequence belongs to the neurotoxin 19 (CSTX) family. 04 (U1-Lctx) subfamily. In terms of tissue distribution, expressed by the venom gland.

The protein localises to the secreted. This Lycosa singoriensis (Wolf spider) protein is U1-lycotoxin-Ls1p.